Here is a 249-residue protein sequence, read N- to C-terminus: Triosephosphate isomerase (249 aa).

Residues Asn12 and Lys14 each contribute to the substrate site. At Lys14 the chain carries N6-acetyllysine. A 3'-nitrotyrosine modification is found at Tyr68. Ser80 is subject to Phosphoserine. His96 (electrophile) is an active-site residue. The residue at position 106 (Ser106) is a Phosphoserine. Lys142 is covalently cross-linked (Glycyl lysine isopeptide (Lys-Gly) (interchain with G-Cter in SUMO1)). Residue Lys149 is modified to N6-succinyllysine. N6-acetyllysine; alternate is present on Lys156. At Lys156 the chain carries N6-succinyllysine; alternate. A Phosphoserine modification is found at Ser159. Glu166 functions as the Proton acceptor in the catalytic mechanism. At Thr173 the chain carries Phosphothreonine. Lys194 is subject to N6-acetyllysine; alternate. Lys194 is modified (N6-succinyllysine; alternate). Lys194 carries the post-translational modification N6-methyllysine; alternate. Ser198 is subject to Phosphoserine. Tyr209 is subject to 3'-nitrotyrosine. Ser212 carries the post-translational modification Phosphoserine. Thr214 is subject to Phosphothreonine. A Phosphoserine modification is found at Ser223. Lys238 is modified (N6-acetyllysine).

Belongs to the triosephosphate isomerase family. As to quaternary structure, homodimer.

Its subcellular location is the cytoplasm. The enzyme catalyses dihydroxyacetone phosphate = methylglyoxal + phosphate. The catalysed reaction is D-glyceraldehyde 3-phosphate = dihydroxyacetone phosphate. It participates in carbohydrate degradation; glycolysis; D-glyceraldehyde 3-phosphate from glycerone phosphate: step 1/1. It functions in the pathway carbohydrate biosynthesis; gluconeogenesis. Functionally, triosephosphate isomerase is an extremely efficient metabolic enzyme that catalyzes the interconversion between dihydroxyacetone phosphate (DHAP) and D-glyceraldehyde-3-phosphate (G3P) in glycolysis and gluconeogenesis. It is also responsible for the non-negligible production of methylglyoxal a reactive cytotoxic side-product that modifies and can alter proteins, DNA and lipids. The protein is Triosephosphate isomerase (TPI1) of Macaca fascicularis (Crab-eating macaque).